Here is a 122-residue protein sequence, read N- to C-terminus: Large ribosomal subunit protein bL12 (122 aa).

Belongs to the bacterial ribosomal protein bL12 family. Homodimer. Part of the ribosomal stalk of the 50S ribosomal subunit. Forms a multimeric L10(L12)X complex, where L10 forms an elongated spine to which 2 to 4 L12 dimers bind in a sequential fashion. Binds GTP-bound translation factors.

Functionally, forms part of the ribosomal stalk which helps the ribosome interact with GTP-bound translation factors. Is thus essential for accurate translation. The sequence is that of Large ribosomal subunit protein bL12 from Xylella fastidiosa (strain 9a5c).